We begin with the raw amino-acid sequence, 357 residues long: BLOC-1-related complex subunit 6 (357 aa).

The interval 20 to 196 is disordered; the sequence is HQALVFGGGP…SGAGGGRRAT (177 aa). The span at 90–99 shows a compositional bias: low complexity; the sequence is GAGSRRGAPG. The span at 138–149 shows a compositional bias: acidic residues; sequence EQQEEEDNDEEA. Over residues 150-162 the composition is skewed to low complexity; sequence AAGSRAGRSFSSR. At Ser168 the chain carries Phosphoserine. Thr196 bears the Phosphothreonine mark. The residue at position 199 (Ser199) is a Phosphoserine. A disordered region spans residues 227–256; the sequence is LSGAPPPPPSAPARPCPAPAPTPTPAIPPI. The span at 230–256 shows a compositional bias: pro residues; sequence APPPPPSAPARPCPAPAPTPTPAIPPI.

This sequence belongs to the BORCS6 family. Component of the BLOC-one-related complex (BORC) which is composed of BLOC1S1, BLOC1S2, BORCS5, BORCS6, BORCS7, BORCS8, KXD1 and SNAPIN.

Its subcellular location is the lysosome membrane. As part of the BORC complex may play a role in lysosomes movement and localization at the cell periphery. Associated with the cytosolic face of lysosomes, the BORC complex may recruit ARL8B and couple lysosomes to microtubule plus-end-directed kinesin motor. The polypeptide is BLOC-1-related complex subunit 6 (Homo sapiens (Human)).